A 285-amino-acid chain; its full sequence is Inositol oxygenase (285 aa).

Arg29 contributes to the substrate binding site. A Phosphoserine modification is found at Ser33. Residue 85–88 participates in substrate binding; sequence DESD. Fe cation contacts are provided by His98, His123, and Asp124. Substrate-binding positions include Lys127 and 141–142; that span reads GD. Fe cation contacts are provided by His194, His220, and Asp253. Residue 220-221 coordinates substrate; sequence HS.

Belongs to the myo-inositol oxygenase family. Fe cation serves as cofactor. As to expression, kidney specific. Renal proximal tubules.

It localises to the cytoplasm. It catalyses the reaction myo-inositol + O2 = D-glucuronate + H2O + H(+). The protein operates within polyol metabolism; myo-inositol degradation into D-glucuronate; D-glucuronate from myo-inositol: step 1/1. This chain is Inositol oxygenase (Miox), found in Mus musculus (Mouse).